The primary structure comprises 407 residues: Indoleamine 2,3-dioxygenase 1 (407 aa).

H350 contacts heme b. The disordered stretch occupies residues 362-388 (SKQKPMGGHKSEEPSNTENRGTGGTDV).

This sequence belongs to the indoleamine 2,3-dioxygenase family. Monomer. Heme b serves as cofactor.

The protein localises to the cytoplasm. Its subcellular location is the cytosol. It carries out the reaction D-tryptophan + O2 = N-formyl-D-kynurenine. The catalysed reaction is L-tryptophan + O2 = N-formyl-L-kynurenine. With respect to regulation, activity is inhibited by and MTH-trp (methylthiohydantoin-DL-tryptophan), modestly inhibited by L-1MT (1-methyl-L-tryptophan) but not D-1MT (1-methyl-D-tryptophan). Its function is as follows. Catalyzes the first and rate limiting step of the catabolism of the essential amino acid tryptophan along the kynurenine pathway. Involved in the peripheral immune tolerance, contributing to maintain homeostasis by preventing autoimmunity or immunopathology that would result from uncontrolled and overreacting immune responses. Tryptophan shortage inhibits T lymphocytes division and accumulation of tryptophan catabolites induces T-cell apoptosis and differentiation of regulatory T-cells. Acts as a suppressor of anti-tumor immunity. Limits the growth of intracellular pathogens by depriving tryptophan. Protects the fetus from maternal immune rejection. This is Indoleamine 2,3-dioxygenase 1 from Rattus norvegicus (Rat).